The following is a 249-amino-acid chain: Gamma-glutamyl peptidase 3 (249 aa).

Residues 19 to 217 (SEFVKKTYGG…VDRVLNMKLM (199 aa)) enclose the Glutamine amidotransferase type-1 domain. Catalysis depends on Cys-103, which acts as the Nucleophile. Active-site residues include His-196 and Glu-198.

The protein belongs to the peptidase C26 family.

The protein localises to the cytoplasm. It is found in the cytosol. It carries out the reaction an S-[(1E)-1-(hydroxyimino)-omega-(methylsulfanyl)alkyl]-L-glutathione + H2O = an S-[(1E)-1-(hydroxyimino)-omega-(methylsulfanyl)alkyl]-L-cysteinylglycine + L-glutamate. The catalysed reaction is (E)-1-(glutathione-S-yl)-2-(1H-indol-3-yl)acetohydroximate + H2O = (E)-1-(glycyl-L-cystein-S-yl)-2-(1H-indol-3-yl)acetohydroximate + L-glutamate. It catalyses the reaction 2-(glutathion-S-yl)-2-(1H-indol-3-yl)acetonitrile + H2O = 2-(glycyl-L-cystein-S-yl)-2-(1H-indol-3-yl)acetonitrile + L-glutamate. The enzyme catalyses (Z)-1-(glutathione-S-yl)-2-phenylacetohydroximate + H2O = (Z)-1-(glycyl-L-cystein-S-yl)-2-phenylacetohydroximate + L-glutamate. The protein operates within secondary metabolite biosynthesis. Involved in glucosinolate biosynthesis. Hydrolyzes the gamma-glutamyl peptide bond of several glutathione (GSH) conjugates to produce Cys-Gly conjugates related to glucosinolates. The gamma-Glu-Cys-Gly-GSH conjugates are the sulfur-donating molecule in glucosinolate biosynthesis. Can use the GSH conjugate of the camalexin intermediate IAN (GS-IAN) as substrate. Required for the biosynthesis of camalexin, a pathogen-inducible phytoalexin with antibacterial and antifungal properties. The protein is Gamma-glutamyl peptidase 3 of Arabidopsis thaliana (Mouse-ear cress).